A 337-amino-acid chain; its full sequence is ELAV-like protein 1-A (337 aa).

RRM domains are found at residues 20 to 109 (TNLI…FARP), 117 to 197 (ANLY…FAAN), and 255 to 333 (WCIF…FKTS).

It belongs to the RRM elav family. As to quaternary structure, interacts (via RRM3) with cirbp. Unable to form oligomers. Part of a ribonucleoprotein (RNP) complex, at least composed of elavl1/elrA and/or elavl2/elrB, igf2bp3/vg1RBP, ddx6/Xp54, ybx2/frgy2, lsm14b/rap55b and, in a subset of RNP complexes, stau1/staufen. As to expression, ubiquitously expressed in adults.

It is found in the cytoplasm. The protein localises to the cell cortex. Its function is as follows. RNA-binding protein that binds to the 3'-UTR region of mRNAs and increases their stability. Involved in embryonic stem cells (ESCs) differentiation: preferentially binds mRNAs that are not methylated by N6-methyladenosine (m6A), stabilizing them, promoting ESCs differentiation. Binds to poly-U elements and AU-rich elements (AREs) in the 3'-UTR of target mRNAs. May be involved in cytoplasmic mRNA polyadenylation. Acts cooperatively with cribp to stabilize AU-rich sequence (ARE)-containing mRNAs. May play a role during gastrulation. Required for the vegetal localization of vg1 mRNA. In Xenopus laevis (African clawed frog), this protein is ELAV-like protein 1-A (elavl1-a).